The sequence spans 230 residues: Flagellar L-ring protein (230 aa).

The first 21 residues, 1–21, serve as a signal peptide directing secretion; sequence MMLKTVLRLPVCAALLALAAG. A lipid anchor (N-palmitoyl cysteine) is attached at Cys-22. Cys-22 carries the S-diacylglycerol cysteine lipid modification. The tract at residues 34–53 is disordered; that stretch reads PLTAPPPPPPQPSARPNGSI. Pro residues predominate over residues 36-46; sequence TAPPPPPPQPS.

It belongs to the FlgH family. As to quaternary structure, the basal body constitutes a major portion of the flagellar organelle and consists of four rings (L,P,S, and M) mounted on a central rod.

It is found in the cell outer membrane. It localises to the bacterial flagellum basal body. Its function is as follows. Assembles around the rod to form the L-ring and probably protects the motor/basal body from shearing forces during rotation. This is Flagellar L-ring protein from Bordetella parapertussis (strain 12822 / ATCC BAA-587 / NCTC 13253).